Here is a 419-residue protein sequence, read N- to C-terminus: MTDSIPSGYKPLTCDTLPGYLSSRLTPSCEPGGLPEEWKVSEVGDGNLNMVFIVEGTHKTIIVKQALPWLRAGGEGWPLSLSRAGFEYNVLCQEAKYAGHTLIPQVYFYDPEMALFAMEYLTPHVILRKELINGKKFPKLAEDIGRFLAQTLFNTSDIGMSAEQKKALTAEFALNHELCKITEDLIFTEPYYNAERNNWTSPELDDAVHKAWADVEMIQVAMRYKYKFMTEAQALLHGDLHSGSIMVTDTDTKVIDPEFGFMGPMAFDIGNYIGNLLLAYFSRPGWDANEQRRADYQEWLLQQIVQTWSVFTREFRQLWDNKTQGDAWSTEMYQQNRAALEDAQDQFFATLLEDSLVNAGMEMNRRIIGFAGVAELKQIENTELRAGCERRALTMARDLIVNARQFKNMDSVIQSAKVK.

ATP contacts are provided by Asn49 and Lys64. Residue Asp239 coordinates substrate. ATP is bound at residue 256–258 (DPE). Arg365 is a substrate binding site.

This sequence belongs to the methylthioribose kinase family. As to quaternary structure, homodimer.

It catalyses the reaction 5-(methylsulfanyl)-D-ribose + ATP = 5-(methylsulfanyl)-alpha-D-ribose 1-phosphate + ADP + H(+). The enzyme catalyses 5-deoxy-D-ribose + ATP = 5-deoxy-alpha-D-ribose 1-phosphate + ADP + H(+). It functions in the pathway amino-acid biosynthesis; L-methionine biosynthesis via salvage pathway; S-methyl-5-thio-alpha-D-ribose 1-phosphate from S-methyl-5'-thioadenosine (hydrolase route): step 2/2. Catalyzes the phosphorylation of methylthioribose into methylthioribose-1-phosphate. Also catalyzes the phosphorylation of 5-deoxyribose to 5-deoxyribose-1-phosphate. Part of a bifunctional DHAP-shunt salvage pathway for SAM by-products. This chain is Methylthioribose kinase, found in Escherichia coli O45:K1 (strain S88 / ExPEC).